The sequence spans 194 residues: 7-methyl-GTP pyrophosphatase (194 aa).

The Proton acceptor role is filled by Asp71.

Belongs to the Maf family. YceF subfamily. The cofactor is a divalent metal cation.

It localises to the cytoplasm. It catalyses the reaction N(7)-methyl-GTP + H2O = N(7)-methyl-GMP + diphosphate + H(+). Its function is as follows. Nucleoside triphosphate pyrophosphatase that hydrolyzes 7-methyl-GTP (m(7)GTP). May have a dual role in cell division arrest and in preventing the incorporation of modified nucleotides into cellular nucleic acids. This chain is 7-methyl-GTP pyrophosphatase, found in Aromatoleum aromaticum (strain DSM 19018 / LMG 30748 / EbN1) (Azoarcus sp. (strain EbN1)).